A 525-amino-acid chain; its full sequence is GMP synthase [glutamine-hydrolyzing] (525 aa).

A Glutamine amidotransferase type-1 domain is found at 16–205 (PVLVVDFGAQ…LHDFAGLGAQ (190 aa)). Cys93 functions as the Nucleophile in the catalytic mechanism. Active-site residues include His179 and Glu181. A GMPS ATP-PPase domain is found at 206-399 (WTPANIANAL…LGLPEEIVAR (194 aa)). 233–239 (SGGVDSA) serves as a coordination point for ATP.

In terms of assembly, homodimer.

It catalyses the reaction XMP + L-glutamine + ATP + H2O = GMP + L-glutamate + AMP + diphosphate + 2 H(+). Its pathway is purine metabolism; GMP biosynthesis; GMP from XMP (L-Gln route): step 1/1. Its function is as follows. Catalyzes the synthesis of GMP from XMP. The sequence is that of GMP synthase [glutamine-hydrolyzing] from Mycobacterium bovis (strain BCG / Pasteur 1173P2).